Consider the following 325-residue polypeptide: Melanocortin receptor 5 (325 aa).

Residues 1 to 37 (MNSSSHLTLLDLTLNASEDNILGQNVNNKSSACEDMG) lie on the Extracellular side of the membrane. N-linked (GlcNAc...) asparagine glycans are attached at residues N2, N15, and N28. A helical transmembrane segment spans residues 38-61 (IAVEVFLTLGLVSLLENILVIGAI). Over 62 to 73 (VKNKNLHSPMYF) the chain is Cytoplasmic. A helical membrane pass occupies residues 74-97 (FVGSLAVADMLVSMSNAWETITIY). Residues 98 to 114 (LINNKHVVIADTFVRHI) are Extracellular-facing. Residues 115 to 138 (DNVFDSMICISVVASMCSLLAIAV) traverse the membrane as a helical segment. The Cytoplasmic segment spans residues 139-155 (DRYITIFYALRYHHIMT). The chain crosses the membrane as a helical span at residues 156–179 (ARRSGVIIACIWTFCISCGIVFII). The Extracellular segment spans residues 180 to 186 (YYESKYV). The chain crosses the membrane as a helical span at residues 187–211 (IVCLISMFFTMLFFMVSLYIHMFLL). Residues 212–239 (ARNHVKRIAASPRYNSVRQRASMKGAIT) lie on the Cytoplasmic side of the membrane. Residues 240 to 265 (LTMLLGIFIVCWSPFFLHLILMISCP) traverse the membrane as a helical segment. The Extracellular portion of the chain corresponds to 266 to 273 (QNVYCACF). The chain crosses the membrane as a helical span at residues 274–297 (MSYFNMYLILIMCNSVIDPLIYAL). Residues 298–325 (RSQEMRRTFKEIICCHGFRRTCTLLGRY) are Cytoplasmic-facing. Residues C311 and C312 are each lipidated (S-palmitoyl cysteine).

Belongs to the G-protein coupled receptor 1 family. Very low expression levels is detected in brain, while high levels are found in adrenals, stomach, lung and spleen.

It localises to the cell membrane. Its function is as follows. Receptor for MSH (alpha, beta and gamma) and ACTH. The activity of this receptor is mediated by G proteins which activate adenylate cyclase. This receptor is a possible mediator of the immunomodulation properties of melanocortins. The sequence is that of Melanocortin receptor 5 (Mc5r) from Rattus norvegicus (Rat).